A 504-amino-acid chain; its full sequence is ATP synthase subunit alpha (504 aa).

An ATP-binding site is contributed by 169 to 176 (GDRQTGKT).

It belongs to the ATPase alpha/beta chains family. As to quaternary structure, F-type ATPases have 2 components, CF(1) - the catalytic core - and CF(0) - the membrane proton channel. CF(1) has five subunits: alpha(3), beta(3), gamma(1), delta(1), epsilon(1). CF(0) has three main subunits: a(1), b(2) and c(9-12). The alpha and beta chains form an alternating ring which encloses part of the gamma chain. CF(1) is attached to CF(0) by a central stalk formed by the gamma and epsilon chains, while a peripheral stalk is formed by the delta and b chains.

The protein localises to the cell membrane. It carries out the reaction ATP + H2O + 4 H(+)(in) = ADP + phosphate + 5 H(+)(out). Functionally, produces ATP from ADP in the presence of a proton gradient across the membrane. The alpha chain is a regulatory subunit. The chain is ATP synthase subunit alpha from Clostridium kluyveri (strain ATCC 8527 / DSM 555 / NBRC 12016 / NCIMB 10680 / K1).